Here is a 160-residue protein sequence, read N- to C-terminus: Major pollen allergen Bet v 1-M/N (160 aa).

Brassinolide contacts are provided by Lys-55, Tyr-82, Tyr-84, and Asn-101.

Belongs to the BetVI family.

It localises to the cytoplasm. Its function is as follows. May be a general steroid carrier protein. The chain is Major pollen allergen Bet v 1-M/N (BETV1M) from Betula pendula (European white birch).